Here is a 231-residue protein sequence, read N- to C-terminus: Type 3 secretion system stator protein (231 aa).

In terms of assembly, the core secretion machinery of the T3SS is composed of approximately 20 different proteins, including cytoplasmic components, a base, an export apparatus and a needle. This subunit is part of the cytosolic complex. Interacts directly with Spa47/SctN (T3SS ATPase) and Spa33/SctQ (the major sorting platform component). Homodimer in solution.

It is found in the cytoplasm. Functionally, component of the type III secretion system (T3SS), also called injectisome, which is used to inject bacterial effector proteins into eukaryotic host cells. Acts as a regulator of the Spa47/SctN ATPase activity. It down-regulates the ATPase activity of the oligomeric Spa47/SctN, while it up-regulates the activity of the monomeric form. Important for translocation of MxiH/SctF, the major needle component. The protein is Type 3 secretion system stator protein of Shigella flexneri.